We begin with the raw amino-acid sequence, 190 residues long: dITP/XTP pyrophosphatase (190 aa).

Substrate is bound at residue 10–15; that stretch reads TTNKHK. 2 residues coordinate Mg(2+): Glu-39 and Asp-68. The active-site Proton acceptor is the Asp-68. Substrate contacts are provided by residues Ala-69, 143 to 146, Lys-166, and 171 to 172; these read FGYD and HR.

The protein belongs to the HAM1 NTPase family. Homodimer. Mg(2+) is required as a cofactor.

It carries out the reaction XTP + H2O = XMP + diphosphate + H(+). The enzyme catalyses dITP + H2O = dIMP + diphosphate + H(+). The catalysed reaction is ITP + H2O = IMP + diphosphate + H(+). Pyrophosphatase that catalyzes the hydrolysis of nucleoside triphosphates to their monophosphate derivatives, with a high preference for the non-canonical purine nucleotides XTP (xanthosine triphosphate), dITP (deoxyinosine triphosphate) and ITP. Seems to function as a house-cleaning enzyme that removes non-canonical purine nucleotides from the nucleotide pool, thus preventing their incorporation into DNA/RNA and avoiding chromosomal lesions. The sequence is that of dITP/XTP pyrophosphatase from Hyperthermus butylicus (strain DSM 5456 / JCM 9403 / PLM1-5).